A 487-amino-acid chain; its full sequence is FAD-dependent oxidoreductase domain-containing protein 1 (487 aa).

Residues 62–82 (EQADVVIIGGGILGLSVAFWL) traverse the membrane as a helical segment.

Associates with components of the mitochondrial respiratory chain complex I. The cofactor is FAD.

The protein localises to the mitochondrion inner membrane. In terms of biological role, required for the assembly of the mitochondrial membrane respiratory chain NADH dehydrogenase (Complex I). Involved in mid-late stages of complex I assembly. The polypeptide is FAD-dependent oxidoreductase domain-containing protein 1 (Foxred1) (Mus musculus (Mouse)).